The primary structure comprises 439 residues: 3-phosphoshikimate 1-carboxyvinyltransferase (439 aa).

Residues Lys-27, Ser-28, and Arg-32 each contribute to the 3-phosphoshikimate site. Residue Lys-27 coordinates phosphoenolpyruvate. The phosphoenolpyruvate site is built by Gly-101 and Arg-130. 4 residues coordinate 3-phosphoshikimate: Ser-175, Gln-177, Asp-326, and Lys-353. Gln-177 contributes to the phosphoenolpyruvate binding site. Asp-326 (proton acceptor) is an active-site residue. Phosphoenolpyruvate contacts are provided by Arg-357 and Arg-399.

This sequence belongs to the EPSP synthase family. As to quaternary structure, monomer.

The protein localises to the cytoplasm. The enzyme catalyses 3-phosphoshikimate + phosphoenolpyruvate = 5-O-(1-carboxyvinyl)-3-phosphoshikimate + phosphate. It participates in metabolic intermediate biosynthesis; chorismate biosynthesis; chorismate from D-erythrose 4-phosphate and phosphoenolpyruvate: step 6/7. In terms of biological role, catalyzes the transfer of the enolpyruvyl moiety of phosphoenolpyruvate (PEP) to the 5-hydroxyl of shikimate-3-phosphate (S3P) to produce enolpyruvyl shikimate-3-phosphate and inorganic phosphate. In Synechococcus sp. (strain CC9311), this protein is 3-phosphoshikimate 1-carboxyvinyltransferase.